A 117-amino-acid chain; its full sequence is UPF0375 protein Y45F10C.2 (117 aa).

Residues 1–20 (MNSFVSTVLLLSVTIALVSG) form the signal peptide.

The protein belongs to the UPF0375 family. Expressed in the uterine epithelium.

It is found in the secreted. Negatively regulates the egg-laying rate by promoting retention of fertilized eggs. In Caenorhabditis elegans, this protein is UPF0375 protein Y45F10C.2.